The sequence spans 420 residues: MMQKFRIQGGGPLSGEVSISGAKNAALPILFASLLAEKPVEIANVPKLRDIDTTMELLGRLGVNITRNGSVFIDASGVNEFCAPYDLVKTMRASIWALGPLVARFGQGQVSLPGGCAIGARPVDLHIHGLEQLGATITLEEGYVKASVDGRLKGAHIVMDKVSVGATVTIMSAATLAEGTTVIENAAREPEIVDTADFLNAIGAKVTGAGTDTITIEGVERLGGGYHEVVADRIETGTFLVAAAVSGGKILCRNTRPALLEAVLAKLEEAGAAIETGDDWISIDMTDRELKAVNIRTAPHPGFPTDMQAQFSLLNLVAKGTGIITETIFENRFMHIPELIRMGARAEIEGNTVICGDTDGGLSGAQVMATDLRASASLVIAGSIAEGETIVDRIYHIDRGYEYIEGKFSALGMNIERISE.

23–24 (KN) provides a ligand contact to phosphoenolpyruvate. Arg92 contributes to the UDP-N-acetyl-alpha-D-glucosamine binding site. Residue Cys116 is the Proton donor of the active site. Cys116 is subject to 2-(S-cysteinyl)pyruvic acid O-phosphothioketal. UDP-N-acetyl-alpha-D-glucosamine-binding positions include 121–125 (RPVDL), 161–164 (KVSV), Asp306, and Ile328.

The protein belongs to the EPSP synthase family. MurA subfamily.

The protein resides in the cytoplasm. It catalyses the reaction phosphoenolpyruvate + UDP-N-acetyl-alpha-D-glucosamine = UDP-N-acetyl-3-O-(1-carboxyvinyl)-alpha-D-glucosamine + phosphate. Its pathway is cell wall biogenesis; peptidoglycan biosynthesis. Its function is as follows. Cell wall formation. Adds enolpyruvyl to UDP-N-acetylglucosamine. This Photobacterium profundum (strain SS9) protein is UDP-N-acetylglucosamine 1-carboxyvinyltransferase.